A 575-amino-acid chain; its full sequence is Isocitrate dehydrogenase kinase/phosphatase (575 aa).

Residues 315–321 (APGVKGM) and Lys-336 contribute to the ATP site. Asp-371 is an active-site residue.

This sequence belongs to the AceK family.

The protein resides in the cytoplasm. The catalysed reaction is L-seryl-[isocitrate dehydrogenase] + ATP = O-phospho-L-seryl-[isocitrate dehydrogenase] + ADP + H(+). Bifunctional enzyme which can phosphorylate or dephosphorylate isocitrate dehydrogenase (IDH) on a specific serine residue. This is a regulatory mechanism which enables bacteria to bypass the Krebs cycle via the glyoxylate shunt in response to the source of carbon. When bacteria are grown on glucose, IDH is fully active and unphosphorylated, but when grown on acetate or ethanol, the activity of IDH declines drastically concomitant with its phosphorylation. In Yersinia pseudotuberculosis serotype O:1b (strain IP 31758), this protein is Isocitrate dehydrogenase kinase/phosphatase.